Consider the following 240-residue polypeptide: Phosphoribosyl isomerase A (240 aa).

Catalysis depends on aspartate 11, which acts as the Proton acceptor. Aspartate 130 serves as the catalytic Proton donor.

Belongs to the HisA/HisF family. As to quaternary structure, monomer.

It is found in the cytoplasm. The enzyme catalyses 1-(5-phospho-beta-D-ribosyl)-5-[(5-phospho-beta-D-ribosylamino)methylideneamino]imidazole-4-carboxamide = 5-[(5-phospho-1-deoxy-D-ribulos-1-ylimino)methylamino]-1-(5-phospho-beta-D-ribosyl)imidazole-4-carboxamide. The catalysed reaction is N-(5-phospho-beta-D-ribosyl)anthranilate = 1-(2-carboxyphenylamino)-1-deoxy-D-ribulose 5-phosphate. It functions in the pathway amino-acid biosynthesis; L-histidine biosynthesis; L-histidine from 5-phospho-alpha-D-ribose 1-diphosphate: step 4/9. It participates in amino-acid biosynthesis; L-tryptophan biosynthesis; L-tryptophan from chorismate: step 3/5. Its function is as follows. Catalyzes the isomerization of the aminoaldose moiety of ProFAR to the aminoketose of PRFAR in the biosynthesis pathway for histidine and the isomerization of the aminoaldose PRA to the aminoketose CdRP in the biosynthsis pathway for tryptophan. The sequence is that of Phosphoribosyl isomerase A (priA) from Streptomyces coelicolor (strain ATCC BAA-471 / A3(2) / M145).